We begin with the raw amino-acid sequence, 116 residues long: Large ribosomal subunit protein uL24c (116 aa).

It belongs to the universal ribosomal protein uL24 family. As to quaternary structure, part of the 50S ribosomal subunit.

Its subcellular location is the plastid. It is found in the chloroplast. One of two assembly initiator proteins, it binds directly to the 5'-end of the 23S rRNA, where it nucleates assembly of the 50S subunit. This chain is Large ribosomal subunit protein uL24c (rpl24), found in Pyropia yezoensis (Susabi-nori).